The chain runs to 1641 residues: MWYLAFLLIIGAYAADHAWETGNEYHYLIESRTLTVLDKLSQQFSGIVIKGGLTIQVKSPDTLQAVVSKTQYAPVHKTLENWNDEIADLKFDELSMSGKSFEIKLKHGVIRDVLIDQDVLTWEVNLIKSIVSQLQVDLQGENVIASSDNQIPDDSQPFGVYKAMEDSVGGKCEVLYSITPVPENFDSIPFPNLRKDGLNFFVTKTKNYNKCEQQMAYHSGITDKMNWKLGSNDGVLSRSSTSSIIISGNVKHFTIQSSLTTSEIFVRSKLHDTYSSAVYDSVKLTLDRMNQISNPMSASNNLVSTGNLVYIYNNPFSNQRKLRQPSVSLNSMEARSSENSNEENRSDDDRSNFLSNSGEEREYLQSKPTLNEAPESPLLPYFIGYKGESIQKSEDITSVAARFIAQIAWNLETSPVNAFNFSPSTEYIEPCIILIRLIRTMNVEQIAELENKLSDPIYHLQGNKLPTEYKKSYDKTTWDIFFNAVVSAGTGPALISIKNMIKNGQLKDTQAAMIISKIPKTALTPTSEYVNKFFELITDEQVTKQRFLNTSALLAFAELVRYTQSNRSIHYPVHSFGHMVSKQDNALLETYIPYMANQLTEAIKDGDSRRIQTYIMALGNFGHPKVLSVFEPYLEGTLPASTFQRLMMVVSLNRLSENFPRLARSVAFKIYMNIMEAYELRCAAVYVVMKTNPPLVMLQRMAEFTNQDQDRHVNSVIKTNIDALANLEQPEFQDLAAKARIARELLNPHIDTESYSQGFLFKKIIPSLNMAEITILQIIGSQDTTVPKSSYLNIYQSYGGFNLPPSRMSYEISSFRALLDMWYEMPWMIENETQKKLIIEETIEKLGIKGEDPVQFEGNIFVNTLYSSQFSPLDNNTIEETINAFKRIISSWQRSSKNFTSENINYLHYYDMTVAFPTESGLPFIYTLTVPKLLRINIGGGHKGSKTEHFKELTAAGYIMVHEKVQSRIGFVTPFEHRHYVAGIDTNTRLVTPLGLSISVNTTEENKKFKLTLQPSKYIRYGTGHSTVHFSVVPYTARNNILDLEHDFSKQDNDTLPVHTKEPHEIHFYISNWMFVAKSDLIDSKASEKQGMEAIKETVNLFCNSRGAYYRRFDGLMYFGEVRIRASYDFAKLDSDSSEATIPTIVNKEPDSEERKKQFLKEVGKNMNSAYGYVFDMSIDQGFDVQVFTLAYSYSQIDHKSQALFYWNVQSVDDPKIYAELGAIGYVKSKSISLNPEKALEQIPNDEFKAEIRLGNNFNEEMIKLEGNWTRTDDVKDMAMKSEIVKKCRQDMKQGNILLPACQKANKLINQKDLLMMSIDTTSDILYASANRGILWIQSLISENYVETMNLRSSSKNTIDMEIKMLPDNDDAKISLRTSQADVSFSLKDIIGNDSNVSMKDTFKEQLDDESVCVLDKTHAVTFDGKVYPLKLGKCWHVMMTIYPKRDPNNFEKTLSIPSDMRAIVMAQEMDDGSKQIKMILGDQEVHLQKSGDCLEASVDGETANFSDHKSHQEKDFEIYGSNETITVFSPTYEITVEYDGEHILLMISDNYLNAVRGLCGNYDTQPNNDFIIPENCILTKAEEFAATYAMTQESCQGPAPENKRKAEQSTCMSRSYRPSDVISDREAGRSSTKNRGWGYH.

The N-terminal stretch at 1 to 18 is a signal peptide; sequence MWYLAFLLIIGAYAADHA. A Vitellogenin domain is found at 19–790; sequence WETGNEYHYL…SQDTTVPKSS (772 aa). C172 and C211 are disulfide-bonded. Over residues 322-334 the composition is skewed to polar residues; the sequence is LRQPSVSLNSMEA. The interval 322 to 372 is disordered; that stretch reads LRQPSVSLNSMEARSSENSNEENRSDDDRSNFLSNSGEEREYLQSKPTLNE. Over residues 342 to 351 the composition is skewed to basic and acidic residues; sequence EENRSDDDRS. Residues N344, N549, N566, N831, N875, N898, N1001, N1053, N1268, N1393, N1396, N1505, and N1523 are each glycosylated (N-linked (GlcNAc...) asparagine). The 188-residue stretch at 1410–1597 folds into the VWFD domain; the sequence is ESVCVLDKTH…TYAMTQESCQ (188 aa). C1435 and C1596 are joined by a disulfide. Residues 1594-1641 are disordered; it reads ESCQGPAPENKRKAEQSTCMSRSYRPSDVISDREAGRSSTKNRGWGYH.

Hemolymph.

Its subcellular location is the secreted. In terms of biological role, precursor of the egg-yolk proteins that are sources of nutrients during embryonic development. This is Vitellogenin-1 from Solenopsis invicta (Red imported fire ant).